Reading from the N-terminus, the 637-residue chain is Protein arginine N-methyltransferase 5 (637 aa).

A2 carries the N-acetylalanine modification. Residues 13 to 292 (RVSSGRDLNC…YLEYLSQNRP (280 aa)) form a TIM barrel region. The SAM-dependent MTase PRMT-type domain maps to 308 to 615 (LQSPLQPLMD…SNSKKVWYEW (308 aa)). Y324 serves as a coordination point for S-adenosyl-L-methionine. F327 provides a ligand contact to a protein. Residues 333–334 (KY), E392, and 419–420 (DM) contribute to the S-adenosyl-L-methionine site. E435 and E444 together coordinate a protein. Residues E435 and E444 each act as proton donor/acceptor in the active site. The interval 465-637 (PGEYTSFLAP…PTGRSYTIGL (173 aa)) is beta barrel. Residues 488-494 (REKDRDP) are dimerization.

Belongs to the class I-like SAM-binding methyltransferase superfamily. Protein arginine N-methyltransferase family. Forms, at least, homodimers and homotetramers. Component of the methylosome complex, composed of PRMT5, WDR77 and CLNS1A. Found in a complex composed of PRMT5, WDR77 and RIOK1. RIOK1 and CLNS1A associate with PRMT5 in a mutually exclusive fashion, which allows the recruitment of distinct methylation substrates, such as nucleolin/NCL and Sm proteins, respectively. Interacts with PRDM1. Identified in a complex composed of methylosome and PRMT1 and ERH. Interacts with EGFR; methylates EGFR and stimulates EGFR-mediated ERK activation. Interacts with HOXA9. Interacts with SRGAP2. Found in a complex with COPRS, RUNX1 and CBFB. Interacts with CHTOP; the interaction symmetrically methylates CHTOP, but seems to require the presence of PRMT1. Interacts with EPB41L3; this modulates methylation of target proteins. Component of a high molecular weight E2F-pocket protein complex, CERC (cyclin E1 repressor complex). Associates with SWI/SNF remodeling complexes containing SMARCA2 and SMARCA4. Interacts with JAK2, SSTR1, SUPT5H, BRAF and with active RAF1. Interacts with LSM11, PRMT7 and SNRPD3. Interacts with COPRS; promoting its recruitment on histone H4. Interacts with CLNS1A/pICln. Identified in a complex with CLNS1A/pICln and Sm proteins. Interacts with RPS10. Interacts with WDR77. Interacts with IWS1. Interacts with CRY1. Interacts with POLR2A. Interacts with SMN1/SMN2. Interacts with LYAR; this interaction is direct. Interacts with TTC5/STRAP; this interaction is DNA damage-dependent and promotes PRMT5 interaction with p53/TP53. Interacts with p53/TP53 in response to DNA damage; the interaction is TTC5/STRAP dependent. Interacts with FAM47E; the interaction is direct, promotes PRMT5 localization to chromatin, and does not disrupt its association with WDR77 or STUB1. Interacts with TDRD6. Interacts with STUB1. Interacts with MBD2. Does not interact with MBD3.

Its subcellular location is the cytoplasm. It localises to the nucleus. The protein resides in the golgi apparatus. It catalyses the reaction L-arginyl-[protein] + 2 S-adenosyl-L-methionine = N(omega),N(omega)'-dimethyl-L-arginyl-[protein] + 2 S-adenosyl-L-homocysteine + 2 H(+). With respect to regulation, activity is increased by EGF, HGF, FGF1 or FGF2 treatments, and slightly decreased by NGF treatment. In terms of biological role, arginine methyltransferase that can both catalyze the formation of omega-N monomethylarginine (MMA) and symmetrical dimethylarginine (sDMA), with a preference for the formation of MMA. Specifically mediates the symmetrical dimethylation of arginine residues in the small nuclear ribonucleoproteins Sm D1 (SNRPD1) and Sm D3 (SNRPD3); such methylation being required for the assembly and biogenesis of snRNP core particles. Methylates SUPT5H and may regulate its transcriptional elongation properties. May methylate the N-terminal region of MBD2. Mono- and dimethylates arginine residues of myelin basic protein (MBP) in vitro. May play a role in cytokine-activated transduction pathways. Negatively regulates cyclin E1 promoter activity and cellular proliferation. Methylates histone H2A and H4 'Arg-3' during germ cell development. Methylates histone H3 'Arg-8', which may repress transcription. Methylates the Piwi proteins (PIWIL1, PIWIL2 and PIWIL4), methylation of Piwi proteins being required for the interaction with Tudor domain-containing proteins and subsequent localization to the meiotic nuage. Methylates RPS10. Attenuates EGF signaling through the MAPK1/MAPK3 pathway acting at 2 levels. First, monomethylates EGFR; this enhances EGFR 'Tyr-1197' phosphorylation and PTPN6 recruitment, eventually leading to reduced SOS1 phosphorylation. Second, methylates RAF1 and probably BRAF, hence destabilizing these 2 signaling proteins and reducing their catalytic activity. Required for induction of E-selectin and VCAM-1, on the endothelial cells surface at sites of inflammation. Methylates HOXA9. Methylates and regulates SRGAP2 which is involved in cell migration and differentiation. Acts as a transcriptional corepressor in CRY1-mediated repression of the core circadian component PER1 by regulating the H4R3 dimethylation at the PER1 promoter. Methylates GM130/GOLGA2, regulating Golgi ribbon formation. Methylates H4R3 in genes involved in glioblastomagenesis in a CHTOP- and/or TET1-dependent manner. Symmetrically methylates POLR2A, a modification that allows the recruitment to POLR2A of proteins including SMN1/SMN2 and SETX. This is required for resolving RNA-DNA hybrids created by RNA polymerase II, that form R-loop in transcription terminal regions, an important step in proper transcription termination. Along with LYAR, binds the promoter of gamma-globin HBG1/HBG2 and represses its expression. Symmetrically methylates NCL. Methylates p53/TP53; methylation might possibly affect p53/TP53 target gene specificity. Involved in spliceosome maturation and mRNA splicing in prophase I spermatocytes through the catalysis of the symmetrical arginine dimethylation of SNRPB (small nuclear ribonucleoprotein-associated protein) and the interaction with tudor domain-containing protein TDRD6. This is Protein arginine N-methyltransferase 5 (PRMT5) from Bos taurus (Bovine).